The primary structure comprises 315 residues: Homoserine kinase (315 aa).

97–107 provides a ligand contact to ATP; it reads PPARGLGSSAT.

The protein belongs to the GHMP kinase family. Homoserine kinase subfamily.

Its subcellular location is the cytoplasm. The catalysed reaction is L-homoserine + ATP = O-phospho-L-homoserine + ADP + H(+). Its pathway is amino-acid biosynthesis; L-threonine biosynthesis; L-threonine from L-aspartate: step 4/5. Its function is as follows. Catalyzes the ATP-dependent phosphorylation of L-homoserine to L-homoserine phosphate. The sequence is that of Homoserine kinase from Synechococcus sp. (strain CC9605).